Consider the following 596-residue polypeptide: Aspartate--tRNA(Asp/Asn) ligase (596 aa).

E182 provides a ligand contact to L-aspartate. Residues 206 to 209 are aspartate; that stretch reads QLFK. Residue R228 participates in L-aspartate binding. ATP is bound by residues 228-230 and Q237; that span reads RDE. H456 is a binding site for L-aspartate. An ATP-binding site is contributed by E490. An L-aspartate-binding site is contributed by R497. 542-545 contributes to the ATP binding site; the sequence is GLDR.

This sequence belongs to the class-II aminoacyl-tRNA synthetase family. Type 1 subfamily. As to quaternary structure, homodimer.

It is found in the cytoplasm. It catalyses the reaction tRNA(Asx) + L-aspartate + ATP = L-aspartyl-tRNA(Asx) + AMP + diphosphate. Aspartyl-tRNA synthetase with relaxed tRNA specificity since it is able to aspartylate not only its cognate tRNA(Asp) but also tRNA(Asn). Reaction proceeds in two steps: L-aspartate is first activated by ATP to form Asp-AMP and then transferred to the acceptor end of tRNA(Asp/Asn). In Syntrophotalea carbinolica (strain DSM 2380 / NBRC 103641 / GraBd1) (Pelobacter carbinolicus), this protein is Aspartate--tRNA(Asp/Asn) ligase.